The sequence spans 190 residues: Guanylate kinase (190 aa).

Residues 8–186 enclose the Guanylate kinase-like domain; it reads ARPTVLTGPS…ALAELEKQMN (179 aa). Residue 15-22 coordinates ATP; that stretch reads GPSGVGKG.

The protein belongs to the guanylate kinase family.

It is found in the cytoplasm. It catalyses the reaction GMP + ATP = GDP + ADP. The enzyme catalyses dZMP + ATP = dZDP + ADP. Its pathway is purine metabolism. Essential for recycling GMP and indirectly, cGMP. Functionally, (Microbial infection) Catalyzes the phosphorylation of dZMP to dZDP, when the bacterium is infected by a phage that produces the substrate for the synthesis of dZTP (2- amino-2'-deoxyadenosine 5'-triphosphate), which is then used by the phage as a DNA polymerase substrate. In Synechococcus sp. (strain CC9311), this protein is Guanylate kinase.